We begin with the raw amino-acid sequence, 74 residues long: Large ribosomal subunit protein bL31 (74 aa).

The protein belongs to the bacterial ribosomal protein bL31 family. Type A subfamily. As to quaternary structure, part of the 50S ribosomal subunit.

Functionally, binds the 23S rRNA. The chain is Large ribosomal subunit protein bL31 from Chlorobaculum parvum (strain DSM 263 / NCIMB 8327) (Chlorobium vibrioforme subsp. thiosulfatophilum).